The following is a 266-amino-acid chain: MMKLNTVLSFKNIIGLMLIIFAGILFYAYILQHEWQYVTLSDEQVKKYRISGKKALSLYQLMKDTHELLTKNNIKYWIESGTLLGAVRHQGIIPFDDDLDIGIMHEDEIHLQQILPQFEQLGYTVSYERAYNICKKTCLDIFIVHKEKNKFIYTNIMLRDKYPEHFFYDHELYPLKKYKFGSIEVYGPSDPIGNLNRQYPEWDKYAIIYSPHSLHLPFLSNIEKKTKFILTPELLKPAQPLGPLEDNVNIVNSAKFIRIYKDIDDH.

The helical transmembrane segment at 13–33 threads the bilayer; that stretch reads IIGLMLIIFAGILFYAYILQH.

It belongs to the LicD transferase family.

It localises to the membrane. This is an uncharacterized protein from Rickettsia prowazekii (strain Madrid E).